Consider the following 498-residue polypeptide: Diacylglycerol O-acyltransferase 1 (498 aa).

Positions 1 to 66 are disordered; sequence MGDRGGAGSS…AHTRDKDRQT (66 aa). Residues 1–92 lie on the Cytoplasmic side of the membrane; it reads MGDRGGAGSS…SLFSSDSGFS (92 aa). Positions 1–96 are involved in homomerization; the sequence is MGDRGGAGSS…SDSGFSNYRG (96 aa). Phosphoserine is present on serine 20. Residues 58-68 are compositionally biased toward basic and acidic residues; sequence HTRDKDRQTSV. A helical membrane pass occupies residues 93–127; the sequence is NYRGILNWCVVMLILSNARLSLENLIKYGILVDPI. Residues 128–139 lie on the Lumenal side of the membrane; that stretch reads QVVSLFLKDPYS. The tract at residues 128 to 139 is extracellular loop 1 (EL1); it reads QVVSLFLKDPYS. Residues 140–165 traverse the membrane as a helical segment; the sequence is WPAPCLIIASNIFIVATFQIEKRLSV. Positions 140-498 are MBOAT fold; that stretch reads WPAPCLIIAS…VLNYDAPVGA (359 aa). Residues 166–170 lie on the Cytoplasmic side of the membrane; sequence GALTE. Residues 171–193 traverse the membrane as a helical segment; sequence QMGLLLHVVNLATIICFPAAVAL. At 194 to 200 the chain is on the lumenal side; it reads LVESITP. A helical transmembrane segment spans residues 201-232; sequence VGSLFALASYSIIFLKLSSYRDVNLWCRQRRV. Residues 233–284 lie on the Cytoplasmic side of the membrane; that stretch reads KAKAVSAGKKVSGAAAQNTVSYPDNLTYRDLYYFIFAPTLCYELNFPRSPRI. The segment at 235-287 is intracellular loop 1 (IL1); the sequence is KAVSAGKKVSGAAAQNTVSYPDNLTYRDLYYFIFAPTLCYELNFPRSPRIRKR. Residues 285–319 form a helical membrane-spanning segment; sequence RKRFLLRRVLEMLFFTQLQVGLIQQWMVPTIQNSM. The Lumenal portion of the chain corresponds to 320–326; the sequence is KPFKDMD. Residues 327–364 form a helical membrane-spanning segment; it reads YSRIIERLLKLAVPNHLIWLIFFYWLFHSCLNAVAELL. The Cytoplasmic segment spans residues 365-410; sequence QFGDREFYRDWWNAESVTYFWQNWNIPVHKWCIRHFYKPMLRLGSN. The intracellular loop 2 (IL2) stretch occupies residues 365–410; it reads QFGDREFYRDWWNAESVTYFWQNWNIPVHKWCIRHFYKPMLRLGSN. The FYXDWWN motif motif lies at 371–377; it reads FYRDWWN. An acyl-CoA is bound by residues 385–393, tyrosine 401, and arginine 415; that span reads WQNWNIPVH. Residues 391 to 405 are amphipathic helix (AH); sequence PVHKWCIRHFYKPML. Residues 411 to 431 form a helical membrane-spanning segment; that stretch reads KWMARTGVFWASAFFHEYLVS. Histidine 426 is an active-site residue. The Lumenal segment spans residues 432-439; it reads IPLRMFRL. The helical transmembrane segment at 440 to 458 threads the bilayer; that stretch reads WAFTAMMAQVPLAWIVNRF. Residues 459–460 are Cytoplasmic-facing; the sequence is FQ. Residues 461–492 traverse the membrane as a helical segment; that stretch reads GNYGNAAVWVTLIIGQPVAVLMYVHDYYVLNY. Tyrosine 488 contacts an acyl-CoA. The Lumenal segment spans residues 493-498; sequence DAPVGA.

Belongs to the membrane-bound acyltransferase family. Sterol o-acyltransferase subfamily. Homodimer or homotetramer; both forms have similar enzymatic activities.

It localises to the endoplasmic reticulum membrane. It carries out the reaction an acyl-CoA + a 1,2-diacyl-sn-glycerol = a triacyl-sn-glycerol + CoA. It catalyses the reaction all-trans-retinol + an acyl-CoA = an all-trans-retinyl ester + CoA. The enzyme catalyses 2-(9Z-octadecenoyl)-glycerol + (9Z)-octadecenoyl-CoA = 1,2-di-(9Z-octadecenoyl)-sn-glycerol + CoA. The catalysed reaction is 1,2-di-(9Z-octadecenoyl)-sn-glycerol + (9Z)-octadecenoyl-CoA = 1,2,3-tri-(9Z-octadecenoyl)-glycerol + CoA. It carries out the reaction all-trans-retinol + hexadecanoyl-CoA = all-trans-retinyl hexadecanoate + CoA. It catalyses the reaction 1-O-(9Z-octadecenyl)-glycerol + (9Z)-octadecenoyl-CoA = 1-O-(9Z-octadecyl)-3-(9Z-octadecenoyl)-glycerol + CoA. The enzyme catalyses 1-O-(9Z-octadecyl)-3-(9Z-octadecenoyl)-glycerol + (9Z)-octadecenoyl-CoA = 1-O-(9Z-octadecenyl)-2,3-di-(9Z-octadecenoyl)glycerol + CoA. The catalysed reaction is 1-(9Z-octadecenoyl)-glycerol + (9Z)-octadecenoyl-CoA = 1,2-di-(9Z-octadecenoyl)-glycerol + CoA. It carries out the reaction 1,2-di-(9Z-octadecenoyl)-glycerol + (9Z)-octadecenoate + H(+) = 1,2,3-tri-(9Z-octadecenoyl)-glycerol + H2O. It catalyses the reaction 1-octadecanoyl-2-(5Z,8Z,11Z,14Z-eicosatetraenoyl)-sn-glycerol + (9Z)-octadecenoyl-CoA = 1-octadecanoyl-2-(5Z,8Z,11Z,14Z)-eicosatetraenoyl-3-(9Z)-octadecenoyl-sn-glycerol + CoA. The enzyme catalyses hexadecane-1,2-diol + 2 hexadecanoyl-CoA = 1,2-O,O-dihexadecanoyl-1,2-hexadecanediol + 2 CoA. The catalysed reaction is hexadecane-1,2-diol + hexadecanoyl-CoA = 2-hydroxyhexadecyl hexadecanoate + CoA. It carries out the reaction 2-(9Z-octadecenoyl)-glycerol + hexadecanoyl-CoA = 1-hexadecanoyl-2-(9Z-octadecenoyl)-sn-glycerol + CoA. It catalyses the reaction 1,2-di-(9Z-octadecenoyl)-sn-glycerol + hexadecanoyl-CoA = 1,2-di-(9Z)-octadecenoyl-3-hexadecanoyl-sn-glycerol + CoA. The enzyme catalyses hexadecan-1-ol + hexadecanoyl-CoA = hexadecanyl hexadecanoate + CoA. The catalysed reaction is 13-cis-retinol + hexadecanoyl-CoA = 13-cis-retinyl hexadecanoate + CoA. It carries out the reaction 1,3-di-(9Z-octadecenoyl)-glycerol + (9Z)-octadecenoyl-CoA = 1,2,3-tri-(9Z-octadecenoyl)-glycerol + CoA. It catalyses the reaction 2,3-di-(9Z)-octadecenoyl-sn-glycerol + (9Z)-octadecenoyl-CoA = 1,2,3-tri-(9Z-octadecenoyl)-glycerol + CoA. The protein operates within lipid metabolism; glycerolipid metabolism. Functionally, catalyzes the terminal and only committed step in triacylglycerol synthesis by using diacylglycerol and fatty acyl CoA as substrates. Highly expressed in epithelial cells of the small intestine and its activity is essential for the absorption of dietary fats. In liver, plays a role in esterifying exogenous fatty acids to glycerol, and is required to synthesize fat for storage. Also present in female mammary glands, where it produces fat in the milk. May be involved in VLDL (very low density lipoprotein) assembly. In contrast to DGAT2 it is not essential for survival. Functions as the major acyl-CoA retinol acyltransferase (ARAT) in the skin, where it acts to maintain retinoid homeostasis and prevent retinoid toxicity leading to skin and hair disorders. Exhibits additional acyltransferase activities, includin acyl CoA:monoacylglycerol acyltransferase (MGAT), wax monoester and wax diester synthases. Also able to use 1-monoalkylglycerol (1-MAkG) as an acyl acceptor for the synthesis of monoalkyl-monoacylglycerol (MAMAG). This chain is Diacylglycerol O-acyltransferase 1, found in Rattus norvegicus (Rat).